The sequence spans 385 residues: Beta-lactamase (385 aa).

A signal peptide spans 1–20 (MKRLLAFCLLFFAALGQAKV). The Acyl-ester intermediate role is filled by Ser-84. Tyr-170 (proton acceptor) is an active-site residue. 335 to 337 (KTG) is a substrate binding site.

It belongs to the class-C beta-lactamase family.

The protein resides in the periplasm. The catalysed reaction is a beta-lactam + H2O = a substituted beta-amino acid. In terms of biological role, this protein is a serine beta-lactamase with a substrate specificity for cephalosporins. This chain is Beta-lactamase, found in Lysobacter lactamgenus.